The sequence spans 506 residues: Probable alpha-L-arabinofuranosidase B (506 aa).

Positions 1–26 (MLLPRGFNRAVVTALGVVGTGTLVAA) are cleaved as a signal peptide. The interval 27-343 (GPCDIYSSGG…ANIVAAKYAV (317 aa)) is catalytic. 3 disulfides stabilise this stretch: Cys29–Cys39, Cys89–Cys94, and Cys184–Cys185. Asp227 serves as a coordination point for substrate. Catalysis depends on Glu229, which acts as the Nucleophile. Asn230 contacts substrate. N-linked (GlcNAc...) asparagine glycosylation occurs at Asn285. Gly304 lines the substrate pocket. Residue Asp305 is the Proton donor of the active site. The tract at residues 344–506 (APLTSGPSLT…VSWVVSTSFA (163 aa)) is ABD. N-linked (GlcNAc...) asparagine glycosylation occurs at Asn375. Cysteines 409 and 447 form a disulfide. The substrate site is built by His424, Phe427, Asp443, His471, Leu476, and Asp496.

Belongs to the glycosyl hydrolase 54 family.

Its subcellular location is the secreted. The catalysed reaction is Hydrolysis of terminal non-reducing alpha-L-arabinofuranoside residues in alpha-L-arabinosides.. Its pathway is glycan metabolism; L-arabinan degradation. Alpha-L-arabinofuranosidase involved in the degradation of arabinoxylan, a major component of plant hemicellulose. Able to hydrolyze 1,5-, 1,3- and 1,2-alpha-linkages not only in L-arabinofuranosyl oligosaccharides, but also in polysaccharides containing terminal non-reducing L-arabinofuranoses in side chains, like L-arabinan, arabinogalactan and arabinoxylan. The chain is Probable alpha-L-arabinofuranosidase B (abfB) from Aspergillus terreus (strain NIH 2624 / FGSC A1156).